A 414-amino-acid chain; its full sequence is Esterase FrsA (414 aa).

The protein belongs to the FrsA family.

The catalysed reaction is a carboxylic ester + H2O = an alcohol + a carboxylate + H(+). Its function is as follows. Catalyzes the hydrolysis of esters. In Salmonella choleraesuis (strain SC-B67), this protein is Esterase FrsA.